Consider the following 81-residue polypeptide: Acyl carrier protein (81 aa).

In terms of domain architecture, Carrier spans 2 to 80 (ASKDEILAGL…DAVNFIDNAQ (79 aa)). S40 bears the O-(pantetheine 4'-phosphoryl)serine mark.

The protein belongs to the acyl carrier protein (ACP) family. 4'-phosphopantetheine is transferred from CoA to a specific serine of apo-ACP by AcpS. This modification is essential for activity because fatty acids are bound in thioester linkage to the sulfhydryl of the prosthetic group.

The protein localises to the cytoplasm. Its pathway is lipid metabolism; fatty acid biosynthesis. Its function is as follows. Carrier of the growing fatty acid chain in fatty acid biosynthesis. This Kocuria rhizophila (strain ATCC 9341 / DSM 348 / NBRC 103217 / DC2201) protein is Acyl carrier protein.